A 181-amino-acid polypeptide reads, in one-letter code: Adenine phosphoribosyltransferase (181 aa).

It belongs to the purine/pyrimidine phosphoribosyltransferase family. As to quaternary structure, homodimer.

Its subcellular location is the cytoplasm. It catalyses the reaction AMP + diphosphate = 5-phospho-alpha-D-ribose 1-diphosphate + adenine. It participates in purine metabolism; AMP biosynthesis via salvage pathway; AMP from adenine: step 1/1. Its function is as follows. Catalyzes a salvage reaction resulting in the formation of AMP, that is energically less costly than de novo synthesis. This chain is Adenine phosphoribosyltransferase, found in Mesorhizobium japonicum (strain LMG 29417 / CECT 9101 / MAFF 303099) (Mesorhizobium loti (strain MAFF 303099)).